Here is a 560-residue protein sequence, read N- to C-terminus: MNRKWEAKLKQIEERASHYERKPLSSVYRPRLSKPEEPPSIWRLFHRQAQAFNFVKSCKEDVHVFALECKVGDGQRIYLVTTYAEFWFYYKSRKNLLHCYEVIPENAVCKLYFDLEFNKPANPGADGKKMVALLIEYVCKALQELYGVNCSAEDVLNLDSSTDEKFSRHLIFQLHDVAFKDNIHVGNFLRKILQPALDLLGSEDDDSAPETTGHGFPHFSEAPARQGFSFNKMFTEKATEESWTSNSKKLERLGSAEQSSPDLSFLVVKNNMGEKHLFVDLGVYTRNRNFRLYKSSKIGKRVALEVTEDNKFFPIQSKDVSDEYQYFLSSLVSNVRFSDTLRILTCEPSQNKQKGVGYFNSIGTSVETIEGFQCSPYPEVDHFVLSLVNKDGIKGGIRRWNYFFPEELLVYDICKYRWCENIGRAHKSNNIMILVDLKNEVWYQKCHDPVCKAENFKSDCFPLPAEVCLLFLFKEEEEFTTDEADETRSNETQNPHKPSPSRLSTGASADAVWDNGIDDAYFLEATEDAELAEAAENSLLSYNSEVDEIPDELIIEVLQE.

Residues Met1–Lys22 adopt a coiled-coil conformation. Substrate-binding positions include Arg76, Asp114–Glu116, and Lys165–His169. The Mn(2+) site is built by Asp114 and Glu116. Residues Glu203 to Pro223 are disordered. Position 255 is a phosphoserine (Ser255). Residues Arg288 to Arg291 and Lys297 each bind substrate. Residues Cys419, His426, Cys446, and Cys451 each coordinate Zn(2+). Positions Cys419–Lys452 match the Zinc knuckle motif motif. The interval Thr480–Ala507 is disordered. Residues Thr481–Glu560 form an interaction with RPA1 region. Positions Asn490–Ala507 are enriched in polar residues. 2 short sequence motifs (RPA1-binding motif) span residues Trp513–Glu527 and Glu548–Glu556.

This sequence belongs to the eukaryotic-type primase small subunit family. In terms of assembly, interacts with RPA1; leading to recruitment to chromatin and stimulate DNA primase activity. Interacts with SSBP1. Interacts with POLDIP2; leading to enhance DNA polymerase activity. Mn(2+) is required as a cofactor.

The protein resides in the nucleus. The protein localises to the mitochondrion matrix. Its subcellular location is the chromosome. The enzyme catalyses ssDNA + n NTP = ssDNA/pppN(pN)n-1 hybrid + (n-1) diphosphate.. It catalyses the reaction DNA(n) + a 2'-deoxyribonucleoside 5'-triphosphate = DNA(n+1) + diphosphate. Functionally, DNA primase and DNA polymerase required to tolerate replication-stalling lesions by bypassing them. Required to facilitate mitochondrial and nuclear replication fork progression by initiating de novo DNA synthesis using dNTPs and acting as an error-prone DNA polymerase able to bypass certain DNA lesions. Shows a high capacity to tolerate DNA damage lesions such as 8oxoG and abasic sites in DNA. Provides different translesion synthesis alternatives when DNA replication is stalled: able to synthesize DNA primers downstream of lesions, such as ultraviolet (UV) lesions, R-loops and G-quadruplexes, to allow DNA replication to continue. Can also realign primers ahead of 'unreadable lesions' such as abasic sites and 6-4 photoproduct (6-4 pyrimidine-pyrimidinone), thereby skipping the lesion. Repriming avoids fork degradation while leading to accumulation of internal ssDNA gaps behind the forks. Also able to incorporate nucleotides opposite DNA lesions such as 8oxoG, like a regular translesion synthesis DNA polymerase. Also required for reinitiating stalled forks after UV damage during nuclear DNA replication. Required for mitochondrial DNA (mtDNA) synthesis and replication, by reinitiating synthesis after UV damage or in the presence of chain-terminating nucleotides. Prevents APOBEC family-mediated DNA mutagenesis by repriming downstream of abasic site to prohibit error-prone translesion synthesis. Has non-overlapping function with POLH. In addition to its role in DNA damage response, also required to maintain efficient nuclear and mitochondrial DNA replication in unperturbed cells. The protein is DNA-directed primase/polymerase protein of Homo sapiens (Human).